Consider the following 504-residue polypeptide: Maturase K (504 aa).

The protein belongs to the intron maturase 2 family. MatK subfamily.

The protein resides in the plastid. It is found in the chloroplast. Usually encoded in the trnK tRNA gene intron. Probably assists in splicing its own and other chloroplast group II introns. The protein is Maturase K of Kokia drynarioides (Hawaiian tree cotton).